The sequence spans 933 residues: Exosome complex exonuclease RRP44 homolog A (933 aa).

One can recognise a PINc domain in the interval 50–163 (KIIVVDTNVV…LVTNDRENKR (114 aa)). The 105-residue stretch at 217–321 (QEHKPMSEIT…NVDDAPRTSN (105 aa)) folds into the CSD1 domain. Positions 296–336 (AEEDDEEDDTVHLAPDNVDDAPRTSNLSHETSGDKNAAPVR) are disordered. Residues 371–438 (ALFVSKDRRI…ETEVVLIEND (68 aa)) form the CSD2 domain. One can recognise an RNB domain in the interval 469 to 798 (RQDLRHLLVF…FVHRLLAASL (330 aa)). Residues D481 and D490 each coordinate Mg(2+).

This sequence belongs to the RNR ribonuclease family. As to quaternary structure, probable component of the RNA exosome complex. Mg(2+) serves as cofactor.

It localises to the nucleus. Catalytic component of the RNA exosome complex which has 3'-&gt;5' exoribonuclease activity and participates in a multitude of cellular RNA processing and degradation events. Required for 5.8S rRNA intermediate processing and the degradation of 5' external transcribed spacer (5' ETS), a maturation by-product of rRNA synthesis. Is not involved in the degradation of turnip crinkle virus (TCV) RNA and significant virus resistance. Required for normal development of female gametophytes and early embryogenesis. This is Exosome complex exonuclease RRP44 homolog A from Arabidopsis thaliana (Mouse-ear cress).